The sequence spans 335 residues: Adenine deaminase (335 aa).

The Zn(2+) site is built by histidine 14, histidine 16, and histidine 194. The active-site Proton donor is glutamate 197. Residue aspartate 275 participates in Zn(2+) binding. Aspartate 276 is a binding site for substrate.

This sequence belongs to the metallo-dependent hydrolases superfamily. Adenosine and AMP deaminases family. Adenine deaminase type 2 subfamily. The cofactor is Zn(2+).

The enzyme catalyses adenine + H2O + H(+) = hypoxanthine + NH4(+). Its function is as follows. Catalyzes the hydrolytic deamination of adenine to hypoxanthine. Plays an important role in the purine salvage pathway and in nitrogen catabolism. The chain is Adenine deaminase from Chlorobium phaeobacteroides (strain BS1).